The primary structure comprises 558 residues: Formate--tetrahydrofolate ligase (558 aa).

Residue 67–74 (TPAGEGKT) coordinates ATP.

Belongs to the formate--tetrahydrofolate ligase family.

The enzyme catalyses (6S)-5,6,7,8-tetrahydrofolate + formate + ATP = (6R)-10-formyltetrahydrofolate + ADP + phosphate. The protein operates within one-carbon metabolism; tetrahydrofolate interconversion. The sequence is that of Formate--tetrahydrofolate ligase from Roseobacter denitrificans (strain ATCC 33942 / OCh 114) (Erythrobacter sp. (strain OCh 114)).